An 86-amino-acid polypeptide reads, in one-letter code: Anti-adapter protein IraP (86 aa).

Residues 1-36 adopt a coiled-coil conformation; the sequence is MKNLIAELLFKLAQKEEESKELCAQVEALEIIVTAM.

The protein belongs to the IraP family. As to quaternary structure, interacts with RssB.

It localises to the cytoplasm. Its function is as follows. Inhibits RpoS proteolysis by regulating RssB activity, thereby increasing the stability of the sigma stress factor RpoS especially during phosphate starvation, but also in stationary phase and during nitrogen starvation. Its effect on RpoS stability is due to its interaction with RssB, which probably blocks the interaction of RssB with RpoS, and the consequent delivery of the RssB-RpoS complex to the ClpXP protein degradation pathway. The sequence is that of Anti-adapter protein IraP from Shigella flexneri serotype 5b (strain 8401).